Consider the following 180-residue polypeptide: Insertion element IS1296 uncharacterized 21.4 kDa protein (180 aa).

Belongs to the IS150/IS1296 orfA family.

This Mycoplasma mycoides subsp. mycoides SC protein is Insertion element IS1296 uncharacterized 21.4 kDa protein.